A 774-amino-acid chain; its full sequence is Lysyl oxidase homolog 2 (774 aa).

The signal sequence occupies residues 1-24; the sequence is MEGFLGFNHNHCFIVLFFVSLSLA. SRCR domains are found at residues 57–158, 187–301, 325–424, and 434–543; these read LRLA…VVCS, IRPI…ASCV, VRLK…VRCN, and LRLV…VSCS. Intrachain disulfides connect Cys-83-Cys-147, Cys-96-Cys-157, Cys-127-Cys-137, Cys-217-Cys-290, Cys-230-Cys-300, Cys-264-Cys-274, Cys-350-Cys-413, Cys-363-Cys-423, and Cys-394-Cys-404. Residue Asn-287 is glycosylated (N-linked (GlcNAc...) asparagine). N-linked (GlcNAc...) asparagine glycosylation is present at Asn-454. 3 disulfides stabilise this stretch: Cys-463–Cys-529, Cys-476–Cys-542, and Cys-510–Cys-520. Positions 547-751 are lysyl-oxidase like; that stretch reads PDLVLNAELV…MYNSVHNGAN (205 aa). 2 residues coordinate Ca(2+): Asp-548 and Leu-549. Intrachain disulfides connect Cys-572–Cys-624, Cys-578–Cys-694, Cys-656–Cys-672, and Cys-662–Cys-684. The Cu cation site is built by His-625, His-627, and His-629. N-linked (GlcNAc...) asparagine glycosylation is present at Asn-643. Positions 652-688 form a cross-link, lysine tyrosylquinone (Lys-Tyr); it reads KASFCLEDTECEADVQKQYECANFGEQGITVGCWDVY. 2',4',5'-topaquinone is present on Tyr-688. Ca(2+) is bound by residues Glu-721, Asp-723, Asn-726, and Asn-727.

This sequence belongs to the lysyl oxidase family. Cu cation serves as cofactor. Requires lysine tyrosylquinone residue as cofactor. The lysine tyrosylquinone cross-link (LTQ) is generated by condensation of the epsilon-amino group of a lysine with a topaquinone produced by oxidation of tyrosine.

The protein localises to the secreted. It is found in the extracellular space. It localises to the extracellular matrix. The protein resides in the basement membrane. Its subcellular location is the nucleus. The protein localises to the chromosome. It is found in the endoplasmic reticulum. The enzyme catalyses L-lysyl-[protein] + O2 + H2O = (S)-2-amino-6-oxohexanoyl-[protein] + H2O2 + NH4(+). Its function is as follows. Mediates the post-translational oxidative deamination of lysine residues on target proteins leading to the formation of deaminated lysine (allysine). Acts as a transcription corepressor and specifically mediates deamination of trimethylated 'Lys-4' of histone H3 (H3K4me3), a specific tag for epigenetic transcriptional activation. Shows no activity against histone H3 when it is trimethylated on 'Lys-9' (H3K9me3) or 'Lys-27' (H3K27me3) or when 'Lys-4' is monomethylated (H3K4me1) or dimethylated (H3K4me2). Also mediates deamination of methylated TAF10, a member of the transcription factor IID (TFIID) complex, which induces release of TAF10 from promoters, leading to inhibition of TFIID-dependent transcription. LOXL2-mediated deamination of TAF10 results in transcriptional repression of genes required for embryonic stem cell pluripotency including POU5F1/OCT4, NANOG, KLF4 and SOX2. Involved in epithelial to mesenchymal transition (EMT) via interaction with SNAI1 and participates in repression of E-cadherin CDH1, probably by mediating deamination of histone H3. During EMT, involved with SNAI1 in negatively regulating pericentromeric heterochromatin transcription. SNAI1 recruits LOXL2 to pericentromeric regions to oxidize histone H3 and repress transcription which leads to release of heterochromatin component CBX5/HP1A, enabling chromatin reorganization and acquisition of mesenchymal traits. Interacts with the endoplasmic reticulum protein HSPA5 which activates the IRE1-XBP1 pathway of the unfolded protein response, leading to expression of several transcription factors involved in EMT and subsequent EMT induction. When secreted into the extracellular matrix, promotes cross-linking of extracellular matrix proteins by mediating oxidative deamination of peptidyl lysine residues in precursors to fibrous collagen and elastin. Acts as a regulator of sprouting angiogenesis, probably via collagen IV scaffolding. Acts as a regulator of chondrocyte differentiation, probably by regulating expression of factors that control chondrocyte differentiation. This is Lysyl oxidase homolog 2 (LOXL2) from Gallus gallus (Chicken).